A 466-amino-acid chain; its full sequence is DNA repair protein RadA (466 aa).

The C4-type zinc finger occupies 12 to 29 (CSECQHVAPKWVGRCANC). 100–107 (GDPGVGKS) is an ATP binding site. A RadA KNRFG motif motif is present at residues 261–265 (KNRFG). A lon-protease-like region spans residues 359-466 (DLYLSTVGGM…MREIAIAGAQ (108 aa)).

This sequence belongs to the RecA family. RadA subfamily. As to quaternary structure, interacts with DisA.

Functionally, DNA-dependent ATPase involved in processing of recombination intermediates, plays a role in repairing DNA breaks. Stimulates the branch migration of RecA-mediated strand transfer reactions, allowing the 3' invading strand to extend heteroduplex DNA faster. Binds ssDNA in the presence of ADP but not other nucleotides, has ATPase activity that is stimulated by ssDNA and various branched DNA structures, but inhibited by SSB. Does not have RecA's homology-searching function. Also inhibits the diadenylate cyclase activity of DisA. The sequence is that of DNA repair protein RadA from Mycolicibacterium smegmatis (strain ATCC 700084 / mc(2)155) (Mycobacterium smegmatis).